Reading from the N-terminus, the 421-residue chain is 3-isopropylmalate dehydratase large subunit (421 aa).

Residues Cys300, Cys360, and Cys363 each coordinate [4Fe-4S] cluster.

The protein belongs to the aconitase/IPM isomerase family. LeuC type 2 subfamily. In terms of assembly, heterodimer of LeuC and LeuD. The cofactor is [4Fe-4S] cluster.

It carries out the reaction (2R,3S)-3-isopropylmalate = (2S)-2-isopropylmalate. The protein operates within amino-acid biosynthesis; L-leucine biosynthesis; L-leucine from 3-methyl-2-oxobutanoate: step 2/4. In terms of biological role, catalyzes the isomerization between 2-isopropylmalate and 3-isopropylmalate, via the formation of 2-isopropylmaleate. This chain is 3-isopropylmalate dehydratase large subunit, found in Thermodesulfovibrio yellowstonii (strain ATCC 51303 / DSM 11347 / YP87).